We begin with the raw amino-acid sequence, 320 residues long: Thiamine thiazole synthase (320 aa).

Substrate contacts are provided by residues C82, 103–104 (EA), G111, and V176. A 2,3-didehydroalanine (Cys) modification is found at C209. Residues D211, H226, M278, and 288-290 (RMG) contribute to the substrate site.

Belongs to the THI4 family. Homooctamer. It depends on Fe cation as a cofactor. Post-translationally, during the catalytic reaction, a sulfide is transferred from Cys-209 to a reaction intermediate, generating a dehydroalanine residue.

It localises to the cytoplasm. It is found in the nucleus. It carries out the reaction [ADP-thiazole synthase]-L-cysteine + glycine + NAD(+) = [ADP-thiazole synthase]-dehydroalanine + ADP-5-ethyl-4-methylthiazole-2-carboxylate + nicotinamide + 3 H2O + 2 H(+). Functionally, involved in biosynthesis of the thiamine precursor thiazole. Catalyzes the conversion of NAD and glycine to adenosine diphosphate 5-(2-hydroxyethyl)-4-methylthiazole-2-carboxylic acid (ADT), an adenylated thiazole intermediate. The reaction includes an iron-dependent sulfide transfer from a conserved cysteine residue of the protein to a thiazole intermediate. The enzyme can only undergo a single turnover, which suggests it is a suicide enzyme. May have additional roles in adaptation to various stress conditions and in DNA damage tolerance. This is Thiamine thiazole synthase (sti35) from Fusarium oxysporum f. sp. lycopersici (strain 4287 / CBS 123668 / FGSC 9935 / NRRL 34936) (Fusarium vascular wilt of tomato).